The chain runs to 190 residues: Xanthine phosphoribosyltransferase (190 aa).

Residues leucine 20 and asparagine 27 each coordinate xanthine. A 5-phospho-alpha-D-ribose 1-diphosphate-binding site is contributed by 129-133; it reads ANGRA. Residue lysine 157 coordinates xanthine.

It belongs to the purine/pyrimidine phosphoribosyltransferase family. Xpt subfamily. As to quaternary structure, homodimer.

Its subcellular location is the cytoplasm. The enzyme catalyses XMP + diphosphate = xanthine + 5-phospho-alpha-D-ribose 1-diphosphate. The protein operates within purine metabolism; XMP biosynthesis via salvage pathway; XMP from xanthine: step 1/1. Converts the preformed base xanthine, a product of nucleic acid breakdown, to xanthosine 5'-monophosphate (XMP), so it can be reused for RNA or DNA synthesis. The polypeptide is Xanthine phosphoribosyltransferase (Clostridioides difficile (strain 630) (Peptoclostridium difficile)).